The chain runs to 217 residues: Large ribosomal subunit protein uL3 (217 aa).

Positions glycine 134 to valine 146 are enriched in polar residues. The disordered stretch occupies residues glycine 134–glutamine 154. Position 154 is an N5-methylglutamine (glutamine 154).

It belongs to the universal ribosomal protein uL3 family. As to quaternary structure, part of the 50S ribosomal subunit. Forms a cluster with proteins L14 and L19. Methylated by PrmB.

Its function is as follows. One of the primary rRNA binding proteins, it binds directly near the 3'-end of the 23S rRNA, where it nucleates assembly of the 50S subunit. This is Large ribosomal subunit protein uL3 from Burkholderia lata (strain ATCC 17760 / DSM 23089 / LMG 22485 / NCIMB 9086 / R18194 / 383).